An 874-amino-acid polypeptide reads, in one-letter code: Probable leucine--tRNA ligase, cytoplasmic (874 aa).

The 'HIGH' region signature appears at 36 to 46 (PYMNGRLHLGH). A 'KMSKS' region motif is present at residues 544 to 548 (KMSKS). ATP is bound at residue K547.

It belongs to the class-I aminoacyl-tRNA synthetase family.

The protein localises to the cytoplasm. The catalysed reaction is tRNA(Leu) + L-leucine + ATP = L-leucyl-tRNA(Leu) + AMP + diphosphate. This chain is Probable leucine--tRNA ligase, cytoplasmic, found in Encephalitozoon cuniculi (strain GB-M1) (Microsporidian parasite).